A 151-amino-acid chain; its full sequence is Large ribosomal subunit protein uL15 (151 aa).

The segment at 1-51 (MPLKIEDLKPTPGSRKPKKRLGRGIGSGLGKTAGKGHKGEKARGRGKIGRT) is disordered. Gly residues predominate over residues 23 to 33 (RGIGSGLGKTA).

It belongs to the universal ribosomal protein uL15 family. Part of the 50S ribosomal subunit.

Its function is as follows. Binds to the 23S rRNA. The sequence is that of Large ribosomal subunit protein uL15 from Petrotoga mobilis (strain DSM 10674 / SJ95).